A 1495-amino-acid polypeptide reads, in one-letter code: Chromosome partition protein MukB (1495 aa).

Residue 60–67 (GGNGAGKS) coordinates ATP. Coiled-coil stretches lie at residues 322–693 (RART…SQPD), 861–1140 (EDVM…AKVS), and 1233–1289 (IDAI…LQNI). A flexible hinge region spans residues 692–809 (PDGSEDARLN…EIPLFGRAAR (118 aa)).

It belongs to the SMC family. MukB subfamily. As to quaternary structure, homodimerization via its hinge domain. Binds to DNA via its C-terminal region. Interacts, and probably forms a ternary complex, with MukE and MukF via its C-terminal region. The complex formation is stimulated by calcium or magnesium. Interacts with tubulin-related protein FtsZ.

The protein resides in the cytoplasm. The protein localises to the nucleoid. Functionally, plays a central role in chromosome condensation, segregation and cell cycle progression. Functions as a homodimer, which is essential for chromosome partition. Involved in negative DNA supercoiling in vivo, and by this means organize and compact chromosomes. May achieve or facilitate chromosome segregation by condensation DNA from both sides of a centrally located replisome during cell division. This Pasteurella multocida (strain Pm70) protein is Chromosome partition protein MukB.